Here is a 278-residue protein sequence, read N- to C-terminus: Bifunctional protein FolD (278 aa).

NADP(+) contacts are provided by residues 164–166 (GRS) and Thr228.

It belongs to the tetrahydrofolate dehydrogenase/cyclohydrolase family. In terms of assembly, homodimer.

It catalyses the reaction (6R)-5,10-methylene-5,6,7,8-tetrahydrofolate + NADP(+) = (6R)-5,10-methenyltetrahydrofolate + NADPH. The catalysed reaction is (6R)-5,10-methenyltetrahydrofolate + H2O = (6R)-10-formyltetrahydrofolate + H(+). It functions in the pathway one-carbon metabolism; tetrahydrofolate interconversion. Catalyzes the oxidation of 5,10-methylenetetrahydrofolate to 5,10-methenyltetrahydrofolate and then the hydrolysis of 5,10-methenyltetrahydrofolate to 10-formyltetrahydrofolate. This Mycoplasmopsis synoviae (strain 53) (Mycoplasma synoviae) protein is Bifunctional protein FolD.